We begin with the raw amino-acid sequence, 347 residues long: UDP-N-acetylenolpyruvoylglucosamine reductase (347 aa).

The FAD-binding PCMH-type domain maps to 17–187 (IEQLAAQLVV…TAVGLKFAKA (171 aa)). Residue arginine 163 is part of the active site. Catalysis depends on serine 232, which acts as the Proton donor. Glutamate 327 is an active-site residue.

This sequence belongs to the MurB family. Requires FAD as cofactor.

The protein localises to the cytoplasm. It catalyses the reaction UDP-N-acetyl-alpha-D-muramate + NADP(+) = UDP-N-acetyl-3-O-(1-carboxyvinyl)-alpha-D-glucosamine + NADPH + H(+). Its pathway is cell wall biogenesis; peptidoglycan biosynthesis. Functionally, cell wall formation. This is UDP-N-acetylenolpyruvoylglucosamine reductase from Vibrio cholerae serotype O1 (strain ATCC 39315 / El Tor Inaba N16961).